Reading from the N-terminus, the 500-residue chain is Maturase K (500 aa).

It belongs to the intron maturase 2 family. MatK subfamily.

It localises to the plastid. The protein localises to the chloroplast. Functionally, usually encoded in the trnK tRNA gene intron. Probably assists in splicing its own and other chloroplast group II introns. The polypeptide is Maturase K (Argentina anserina (Silverweed cinquefoil)).